The following is a 339-amino-acid chain: MDFQTLHQLSKTELHCHLDGSLSLSCIRQLAKMIDRKLPATDDELRRLVQAPADSENLGDYLKAFDFVAPLLQTKKALQLAAYDVVEQAAEENVRYIEIRFAPVFSLAGGLSLVEATQAVIEGLHQGMATYDIMAKALVCGMRQLPNTDNQTMFKTTAPLLGSTLVGGDFAGNEADFPTNVCAPAIKTAQSLGVPLTFHAGECHCPQNIGEAVRLGIPRIGHATACFDQPALIEKIVETGTTVELCLTSNLQTKAARTLAEFPYQALKKAGAKITINTDNRTVSNTTLTQEYQRYQQAFGTTAADFLAFNLNAIDAAFIPDADKKSLRDQLHQDYATYC.

Zn(2+) is bound by residues histidine 15 and histidine 17. Residues histidine 17, aspartate 19, and glycine 172 each contribute to the substrate site. Histidine 199 contributes to the Zn(2+) binding site. Glutamate 202 functions as the Proton donor in the catalytic mechanism. Aspartate 279 is a Zn(2+) binding site.

This sequence belongs to the metallo-dependent hydrolases superfamily. Adenosine and AMP deaminases family. Adenosine deaminase subfamily. Requires Zn(2+) as cofactor.

It catalyses the reaction adenosine + H2O + H(+) = inosine + NH4(+). It carries out the reaction 2'-deoxyadenosine + H2O + H(+) = 2'-deoxyinosine + NH4(+). Catalyzes the hydrolytic deamination of adenosine and 2-deoxyadenosine. This chain is Adenosine deaminase, found in Lacticaseibacillus paracasei (strain ATCC 334 / BCRC 17002 / CCUG 31169 / CIP 107868 / KCTC 3260 / NRRL B-441) (Lactobacillus paracasei).